The following is a 546-amino-acid chain: MAKELRFGDDARQQMLAGVNALADAVKATMGPSGRNVVLERSFGAPTVTKDGVSVAKEIEFENRFKNMGAQMVKEVAAKTSDTAGDGTTTATVLARAIVVEGHKAVAAGMNPMDLKRGIDKAVAAVTKKLQEMSKPCKDGKAIAQVGTISANSDQAIGSIIAEAMEKVGKEGVITVEDGNSLENELAVVEGMQFDRGYISPYFINNQQNMSAELEHPFILLVDKKISTIRDMLSVLEAVAKSGPSLLIIAEDVEGEALATLVVNNMRGIVKVCAVKAPGFGDRRKAMLQDIAILTAGEVISEEVGTSLESATLDSLGTAKRVVVTKENTTIIDGEGKAADINARITQIRAQMEETTSDYDREKLQERVAKLAGGVAVIKLVLLPNRMKRKARVEDALHATRAAVEEGIVAGGGVALIRAQKALDGLKGENADQDMGINILRRAIESPLRQIVANAGYEPSVIVNKVAESKDNFGFNAATGEYGDMVEMGILDPTKVTRTALQNAASVASLMLTTECMVADLPKKEEPMGAGEMGGMGGMGGMGGMM.

Residues 29 to 32 (TMGP), Lys50, 86 to 90 (DGTTT), Gly412, 476 to 478 (NAA), and Asp492 each bind ATP.

The protein belongs to the chaperonin (HSP60) family. As to quaternary structure, forms a cylinder of 14 subunits composed of two heptameric rings stacked back-to-back. Interacts with the co-chaperonin GroES.

It is found in the cytoplasm. It catalyses the reaction ATP + H2O + a folded polypeptide = ADP + phosphate + an unfolded polypeptide.. In terms of biological role, together with its co-chaperonin GroES, plays an essential role in assisting protein folding. The GroEL-GroES system forms a nano-cage that allows encapsulation of the non-native substrate proteins and provides a physical environment optimized to promote and accelerate protein folding. Functionally, may play a protective role against the defense mechanisms generated by the infected macrophages. This chain is Chaperonin GroEL, found in Legionella micdadei (Tatlockia micdadei).